A 961-amino-acid polypeptide reads, in one-letter code: Outer capsid protein VP2 (961 aa).

Belongs to the orbivirus VP2 family.

It localises to the virion. Functionally, the VP2 protein is one of the two proteins (with VP5) which constitute the virus particle outer capsid. It is the major target of the host immunogenic response. Responsible for viral attachment to target host cell, probably by binding to sialic acid. This attachment induces virion internalization predominantly through clathrin-dependent endocytosis. The sequence is that of Outer capsid protein VP2 (Segment-2) from Bluetongue virus 1 (isolate South Africa vaccine) (BTV 1).